The chain runs to 377 residues: Uroporphyrinogen decarboxylase (377 aa).

Substrate contacts are provided by residues 40–44, Asp-89, Tyr-169, Ser-224, and His-354; that span reads RQAGR.

This sequence belongs to the uroporphyrinogen decarboxylase family. In terms of assembly, homodimer.

The protein localises to the cytoplasm. It carries out the reaction uroporphyrinogen III + 4 H(+) = coproporphyrinogen III + 4 CO2. The protein operates within porphyrin-containing compound metabolism; protoporphyrin-IX biosynthesis; coproporphyrinogen-III from 5-aminolevulinate: step 4/4. Its function is as follows. Catalyzes the decarboxylation of four acetate groups of uroporphyrinogen-III to yield coproporphyrinogen-III. This chain is Uroporphyrinogen decarboxylase, found in Leifsonia xyli subsp. xyli (strain CTCB07).